The following is a 109-amino-acid chain: Large ribosomal subunit protein uL24 (109 aa).

Belongs to the universal ribosomal protein uL24 family. As to quaternary structure, part of the 50S ribosomal subunit.

Its function is as follows. One of two assembly initiator proteins, it binds directly to the 5'-end of the 23S rRNA, where it nucleates assembly of the 50S subunit. Functionally, one of the proteins that surrounds the polypeptide exit tunnel on the outside of the subunit. The chain is Large ribosomal subunit protein uL24 from Ehrlichia canis (strain Jake).